The sequence spans 165 residues: Transcriptional repressor NrdR (165 aa).

The segment at Cys-3 to Cys-34 is a zinc-finger region. The ATP-cone domain maps to Pro-49 to Glu-139.

This sequence belongs to the NrdR family. The cofactor is Zn(2+).

In terms of biological role, negatively regulates transcription of bacterial ribonucleotide reductase nrd genes and operons by binding to NrdR-boxes. In Colwellia psychrerythraea (strain 34H / ATCC BAA-681) (Vibrio psychroerythus), this protein is Transcriptional repressor NrdR.